Here is a 95-residue protein sequence, read N- to C-terminus: Co-chaperonin GroES (95 aa).

This sequence belongs to the GroES chaperonin family. Heptamer of 7 subunits arranged in a ring. Interacts with the chaperonin GroEL.

It is found in the cytoplasm. Functionally, together with the chaperonin GroEL, plays an essential role in assisting protein folding. The GroEL-GroES system forms a nano-cage that allows encapsulation of the non-native substrate proteins and provides a physical environment optimized to promote and accelerate protein folding. GroES binds to the apical surface of the GroEL ring, thereby capping the opening of the GroEL channel. In Streptococcus salivarius, this protein is Co-chaperonin GroES.